A 328-amino-acid chain; its full sequence is Ferredoxin--NADP reductase 2 (328 aa).

Residues threonine 16, glutamate 35, glutamine 43, tyrosine 48, isoleucine 88, phenylalanine 123, aspartate 284, and threonine 325 each contribute to the FAD site.

This sequence belongs to the ferredoxin--NADP reductase type 2 family. Homodimer. FAD is required as a cofactor.

It carries out the reaction 2 reduced [2Fe-2S]-[ferredoxin] + NADP(+) + H(+) = 2 oxidized [2Fe-2S]-[ferredoxin] + NADPH. This is Ferredoxin--NADP reductase 2 from Oceanobacillus iheyensis (strain DSM 14371 / CIP 107618 / JCM 11309 / KCTC 3954 / HTE831).